Here is an 850-residue protein sequence, read N- to C-terminus: Mitochondrial escape protein 2 (850 aa).

The N-terminal 44 residues, 1-44 (MLLVRTTSLNVSRMPVPCLARGIGILKGKYRLANLMNAQPSVRH), are a transit peptide targeting the mitochondrion. The interval 44 to 66 (HVSSEIQQKDQQAGESNTATDTG) is disordered. Topologically, residues 45–287 (VSSEIQQKDQ…VSNFFTNHTR (243 aa)) are mitochondrial matrix. A compositionally biased stretch (polar residues) spans 47-64 (SEIQQKDQQAGESNTATD). In terms of domain architecture, RRM spans 198-272 (TTIVIKFQGP…TVLHIQYENI (75 aa)). A helical transmembrane segment spans residues 288–308 (IAIPVLFALLSIFAVLVFDPI). Topologically, residues 309–850 (REFSIEQKIT…CEEEIKNLSK (542 aa)) are mitochondrial intermembrane. The span at 607 to 621 (KGENVKEPESEKETA) shows a compositional bias: basic and acidic residues. The tract at residues 607–633 (KGENVKEPESEKETAENNDSDSEADTS) is disordered.

This sequence belongs to the YME2 family.

The protein resides in the mitochondrion inner membrane. In terms of biological role, plays a role in maintaining the mitochondrial genome and in controlling the mtDNA escape. Involved in the regulation of mtDNA nucleotide structure and number. May have a dispensable role in early maturation of pre-rRNA. The chain is Mitochondrial escape protein 2 (YME2) from Saccharomyces cerevisiae (strain ATCC 204508 / S288c) (Baker's yeast).